Reading from the N-terminus, the 186-residue chain is Ribosome-recycling factor (186 aa).

Belongs to the RRF family.

It localises to the cytoplasm. Responsible for the release of ribosomes from messenger RNA at the termination of protein biosynthesis. May increase the efficiency of translation by recycling ribosomes from one round of translation to another. In Phocaeicola vulgatus (strain ATCC 8482 / DSM 1447 / JCM 5826 / CCUG 4940 / NBRC 14291 / NCTC 11154) (Bacteroides vulgatus), this protein is Ribosome-recycling factor.